The following is a 426-amino-acid chain: Enolase (426 aa).

Residue Q162 participates in (2R)-2-phosphoglycerate binding. E204 acts as the Proton donor in catalysis. Mg(2+)-binding residues include D241, E284, and D311. (2R)-2-phosphoglycerate-binding residues include K336, R365, S366, and K387. The Proton acceptor role is filled by K336.

The protein belongs to the enolase family. Component of the RNA degradosome, a multiprotein complex involved in RNA processing and mRNA degradation. Requires Mg(2+) as cofactor.

It localises to the cytoplasm. It is found in the secreted. Its subcellular location is the cell surface. It catalyses the reaction (2R)-2-phosphoglycerate = phosphoenolpyruvate + H2O. It participates in carbohydrate degradation; glycolysis; pyruvate from D-glyceraldehyde 3-phosphate: step 4/5. Its function is as follows. Catalyzes the reversible conversion of 2-phosphoglycerate (2-PG) into phosphoenolpyruvate (PEP). It is essential for the degradation of carbohydrates via glycolysis. This is Enolase from Hydrogenovibrio crunogenus (strain DSM 25203 / XCL-2) (Thiomicrospira crunogena).